The primary structure comprises 270 residues: Regulatory protein RecX (270 aa).

Belongs to the RecX family.

It localises to the cytoplasm. Modulates RecA activity. The chain is Regulatory protein RecX from Bacillus cereus (strain B4264).